Consider the following 334-residue polypeptide: Tryptophan--tRNA ligase (334 aa).

Residues 12–14 (QPS) and 20–21 (GN) contribute to the ATP site. A 'HIGH' region motif is present at residues 13 to 21 (PSGIPTLGN). Asp136 provides a ligand contact to L-tryptophan. ATP contacts are provided by residues 148–150 (GKD), Ile187, and 196–200 (KMSKS). The 'KMSKS' region signature appears at 196–200 (KMSKS).

Belongs to the class-I aminoacyl-tRNA synthetase family. Homodimer.

Its subcellular location is the cytoplasm. It catalyses the reaction tRNA(Trp) + L-tryptophan + ATP = L-tryptophyl-tRNA(Trp) + AMP + diphosphate + H(+). Its function is as follows. Catalyzes the attachment of tryptophan to tRNA(Trp). The polypeptide is Tryptophan--tRNA ligase (Wigglesworthia glossinidia brevipalpis).